A 310-amino-acid polypeptide reads, in one-letter code: Junctional adhesion molecule C (310 aa).

Positions 1 to 31 are cleaved as a signal peptide; that stretch reads MALRRPPRLRLCARLPDFFLLLLFRGCLIGA. Over 32 to 241 the chain is Extracellular; that stretch reads VNLKSSNRTP…EQEMEVYDLN (210 aa). In terms of domain architecture, Ig-like V-type spans 35 to 127; the sequence is KSSNRTPVVQ…VARNDRKEID (93 aa). Intrachain disulfides connect Cys53/Cys115 and Cys160/Cys219. Residues Asn104 and Asn192 are each glycosylated (N-linked (GlcNAc...) asparagine). The Ig-like C2-type domain maps to 139 to 236; sequence PVTPVCRVPK…SARCEEQEME (98 aa). The helical transmembrane segment at 242–262 threads the bilayer; sequence IGGIIGGVLVVLAVLALITLG. At 263 to 310 the chain is on the cytoplasmic side; sequence ICCAYRRGYFINNKQDGESYKNPGKPDGVNYIRTDEEGDFRHKSSFVI. S-palmitoyl cysteine attachment occurs at residues Cys264 and Cys265.

Belongs to the immunoglobulin superfamily. In terms of assembly, interacts with ITGAM. Interacts with GORASP2. In terms of processing, proteolytically cleaved from endothelial cells surface into a soluble form by ADAM10 and ADAM17; the release of soluble JAM3 is increased by pro-inflammatory factors. Post-translationally, S-palmitoylated by ZDHHC7. S-palmitoylation promotes expression at tight junctions. Detected on round and elongated spermatids (at protein level). Highest expression in placenta, brain and kidney. Significant expression is detected on platelets. Expressed in intestinal mucosa cells. Expressed in the vascular endothelium. Found in serum (at protein level). Also detected in the synovial fluid of patients with rheumatoid arthritis, psoriatic arthritis or ostearthritis (at protein level).

The protein localises to the cell membrane. The protein resides in the cell junction. Its subcellular location is the desmosome. It localises to the tight junction. It is found in the secreted. In terms of biological role, junctional adhesion protein that mediates heterotypic cell-cell interactions with its cognate receptor JAM2 to regulate different cellular processes. Plays a role in homing and mobilization of hematopoietic stem and progenitor cells within the bone marrow. At the surface of bone marrow stromal cells, it contributes to the retention of the hematopoietic stem and progenitor cells expressing JAM3. Plays a central role in leukocytes extravasation by facilitating transmigration through the endothelium. Plays a role in spermatogenesis where JAM2 and JAM3, which are respectively expressed by Sertoli and germ cells, mediate an interaction between both cell types and play an essential role in the anchorage of germ cells onto Sertoli cells and the assembly of cell polarity complexes during spermatid differentiation. Also functions as a counter-receptor for ITGAM, mediating leukocyte-platelet interactions and is involved in the regulation of transepithelial migration of polymorphonuclear neutrophils (PMN). Plays a role in angiogenesis. Plays a role in the regulation of cell migration. During myogenesis, it is involved in myocyte fusion. Functionally, promotes chemotaxis of vascular endothelial cells and stimulates angiogenesis. This Homo sapiens (Human) protein is Junctional adhesion molecule C (JAM3).